The primary structure comprises 564 residues: Laccase-22 (564 aa).

Residues 1–25 (MAVLPESRRLSLLLMAACFLLQALS) form the signal peptide. Plastocyanin-like domains follow at residues 36 to 152 (NVVM…PKLG) and 162 to 314 (KEAV…YANT). 2 N-linked (GlcNAc...) asparagine glycosylation sites follow: Asn-41 and Asn-82. 2 residues coordinate Cu cation: His-86 and His-88. Asn-118 carries N-linked (GlcNAc...) asparagine glycosylation. Residues His-131 and His-133 each coordinate Cu cation. Residues Asn-191, Asn-302, Asn-331, Asn-379, Asn-389, Asn-424, Asn-437, and Asn-447 are each glycosylated (N-linked (GlcNAc...) asparagine). The Plastocyanin-like 3 domain maps to 414–548 (DFPATPLHKF…KMAFVVDNGK (135 aa)). His-465, His-468, His-470, His-527, Cys-528, His-529, and His-533 together coordinate Cu cation.

This sequence belongs to the multicopper oxidase family. Requires Cu cation as cofactor.

The protein resides in the secreted. It is found in the extracellular space. It localises to the apoplast. The catalysed reaction is 4 hydroquinone + O2 = 4 benzosemiquinone + 2 H2O. Functionally, lignin degradation and detoxification of lignin-derived products. The chain is Laccase-22 (LAC22) from Oryza sativa subsp. japonica (Rice).